The chain runs to 493 residues: 3-octaprenyl-4-hydroxybenzoate carboxy-lyase (493 aa).

Mn(2+) is bound at residue Asn175. Prenylated FMN contacts are provided by residues 178–180 (IYR), 192–194 (RWL), and 197–198 (RG). A Mn(2+)-binding site is contributed by Glu241. The active-site Proton donor is Asp290.

The protein belongs to the UbiD family. Homohexamer. Prenylated FMN serves as cofactor. Requires Mn(2+) as cofactor.

Its subcellular location is the cell membrane. The catalysed reaction is a 4-hydroxy-3-(all-trans-polyprenyl)benzoate + H(+) = a 2-(all-trans-polyprenyl)phenol + CO2. It functions in the pathway cofactor biosynthesis; ubiquinone biosynthesis. Functionally, catalyzes the decarboxylation of 3-octaprenyl-4-hydroxy benzoate to 2-octaprenylphenol, an intermediate step in ubiquinone biosynthesis. This chain is 3-octaprenyl-4-hydroxybenzoate carboxy-lyase, found in Photorhabdus laumondii subsp. laumondii (strain DSM 15139 / CIP 105565 / TT01) (Photorhabdus luminescens subsp. laumondii).